The sequence spans 416 residues: Iron/alpha-ketoglutarate-dependent dioxygenase asqJ (416 aa).

The interval 1–53 (MGYPKAFTSSDSEPEPDLSRDLGNPVMGNPGVVSRSSSTVAQHSVRNNPTGPD) is disordered. Polar residues predominate over residues 34–50 (SRSSSTVAQHSVRNNPT). Residues His242, Asp244, and His319 each contribute to the Fe cation site.

Belongs to the PhyH family. In terms of assembly, homodimer. Requires Fe cation as cofactor.

It carries out the reaction (-)-4'-methoxycyclopeptine + 2-oxoglutarate + O2 = (Z)-4'-methoxydehydrocyclopeptine + succinate + CO2 + H2O. It catalyses the reaction (Z)-4'-methoxydehydrocyclopeptine + 2-oxoglutarate + O2 = (-)-4'-methoxycyclopenine + succinate + CO2. The catalysed reaction is (-)-cyclopeptine + 2-oxoglutarate + O2 = (Z)-dehydrocyclopeptine + succinate + CO2 + H2O. The enzyme catalyses (Z)-dehydrocyclopeptine + 2-oxoglutarate + O2 = (-)-cyclopenine + succinate + CO2. It participates in secondary metabolite biosynthesis. Its pathway is alkaloid biosynthesis. It functions in the pathway mycotoxin biosynthesis. Functionally, iron/alpha-ketoglutarate-dependent dioxygenase; part of the gene cluster that mediates the biosynthesis of the aspoquinolone mycotoxins. Within the pathway, the iron/alpha-ketoglutarate-dependent dioxygenase asqJ acts as a (-)-cyclopenine synthase that converts 4'-methoxycyclopeptin into 4'-methoxydehydrocyclopeptin through dehydrogenation to form a double bond between C-alpha and C-beta of the O-methyltyrosine side chain. AsqJ is a very unique dioxygenase which is capable of catalyzing radical-mediated dehydrogenation and epoxidation reactions sequentially on a 6,7-benzo-diazepinedione substrate in the 4'-methoxyviridicatin biosynthetic pathway. AsqJ is also capable of converting cyclopeptin into dehydrocyclopeptin. The first step of the pathway is catalyzed by the nonribosomal peptide synthetase asqK that condenses anthranilic acid and O-methyl-L-tyrosine to produce 4'-methoxycyclopeptin. 4'-methoxycyclopeptin is then converted to 4'-methoxydehydrocyclopeptin by the ketoglutarate-dependent dioxygenase asqJ. AsqJ also converts its first product 4'-methoxydehydrocyclopeptin to 4'-methoxycyclopenin. The following conversion of 4'-methoxycyclopenin into 4'-methoxyviridicatin is catalyzed by the cyclopenase asqI. 4'-methoxyviridicatin is the precursor of quinolone natural products, and is further converted to quinolinone B. The prenyltransferase asqH1 then catalyzes the canonical Friedel-Crafts alkylation of quinolinone B with dimethylallyl cation to yield dimethylallyl quinolone, which is subjected to FAD-dependent dehydrogenation by the FAD-linked oxidoreductase asqF to yield conjugated aryl diene. The delta(3') double bond then serves as the site of the second alkylation with DMAPP catalyzed by the prenyltransferase asqH2 to yield a carbenium ion intermediate, which can be attacked by H(2)O to yield a styrenyl quinolone containing a C3'-hydroxyprenyl chain. The FAD-dependent monooxygenase asqG performs epoxidation of the terminal C7'-C8' olefin. Finally, after dehydratation of the epoxide at C3 by asqC, the quinolone epoxide rearrangement protein asqO catalyzes an enzymatic 3-exo-tet cyclization to yield the cyclopropyl-THF ring system in aspoquinolone. This is Iron/alpha-ketoglutarate-dependent dioxygenase asqJ from Emericella nidulans (strain FGSC A4 / ATCC 38163 / CBS 112.46 / NRRL 194 / M139) (Aspergillus nidulans).